The primary structure comprises 612 residues: UvrABC system protein C (612 aa).

The 79-residue stretch at 21-99 (KLPGVYQMYD…IKSQKPPFNI (79 aa)) folds into the GIY-YIG domain. The UVR domain maps to 209 to 244 (EVLQQELQVEMEQASQALDFERAVVVRDQITDLRQV).

This sequence belongs to the UvrC family. Interacts with UvrB in an incision complex.

It localises to the cytoplasm. Functionally, the UvrABC repair system catalyzes the recognition and processing of DNA lesions. UvrC both incises the 5' and 3' sides of the lesion. The N-terminal half is responsible for the 3' incision and the C-terminal half is responsible for the 5' incision. In Saccharophagus degradans (strain 2-40 / ATCC 43961 / DSM 17024), this protein is UvrABC system protein C.